We begin with the raw amino-acid sequence, 670 residues long: UvrABC system protein B (670 aa).

Positions 26-414 constitute a Helicase ATP-binding domain; sequence EGLEDGLAHQ…GGDVIDQVVR (389 aa). 39–46 lines the ATP pocket; that stretch reads GVTGSGKT. Residues 92-115 carry the Beta-hairpin motif; the sequence is YYDYYQPEAYVPSSDTFIEKDASV. A Helicase C-terminal domain is found at 431-597; sequence QVDDLLSEIR…GINKKISDIL (167 aa). The UVR domain occupies 630 to 665; sequence ELKIRELESKMLTHAQNLEFEEAAALRDEVQVLRAQ.

It belongs to the UvrB family. Forms a heterotetramer with UvrA during the search for lesions. Interacts with UvrC in an incision complex.

It localises to the cytoplasm. Functionally, the UvrABC repair system catalyzes the recognition and processing of DNA lesions. A damage recognition complex composed of 2 UvrA and 2 UvrB subunits scans DNA for abnormalities. Upon binding of the UvrA(2)B(2) complex to a putative damaged site, the DNA wraps around one UvrB monomer. DNA wrap is dependent on ATP binding by UvrB and probably causes local melting of the DNA helix, facilitating insertion of UvrB beta-hairpin between the DNA strands. Then UvrB probes one DNA strand for the presence of a lesion. If a lesion is found the UvrA subunits dissociate and the UvrB-DNA preincision complex is formed. This complex is subsequently bound by UvrC and the second UvrB is released. If no lesion is found, the DNA wraps around the other UvrB subunit that will check the other stand for damage. The chain is UvrABC system protein B from Pectobacterium atrosepticum (strain SCRI 1043 / ATCC BAA-672) (Erwinia carotovora subsp. atroseptica).